The sequence spans 2195 residues: Genome polyprotein (2195 aa).

A lipid anchor (N-myristoyl glycine; by host) is attached at Gly2. Over 2 to 1505 (GAQVSTQKTG…HVSRAFICLQ (1504 aa)) the chain is Cytoplasmic. The tract at residues 567–583 (LLQGDVVEAVENAVARV) is amphipathic alpha-helix. Catalysis depends on for protease 2A activity residues His882 and Asp900. Cys917 and Cys919 together coordinate Zn(2+). The For protease 2A activity role is filled by Cys971. Residues Cys977 and His979 each contribute to the Zn(2+) site. The segment at 1111 to 1183 (NNGWLKKFTE…EQSAPSQSDQ (73 aa)) is membrane-binding. Positions 1111–1249 (NNGWLKKFTE…SPGAGKSVAT (139 aa)) are oligomerization. The interval 1132 to 1136 (SIKIQ) is RNA-binding. The SF3 helicase domain occupies 1215–1371 (EKKMSNYIQF…SMYSQNGKIN (157 aa)). Positions 1379, 1391, and 1396 each coordinate Zn(2+). The C4-type; degenerate zinc finger occupies 1379-1396 (CDEECCPVNFKRCCPLVC). Residues 1423-1430 (EYNHRHSV) form an RNA-binding region. The tract at residues 1434–1439 (LEALFQ) is oligomerization. The stretch at 1506–1521 (ALTTFVSVAGIIYIIY) is an intramembrane region. Topologically, residues 1522 to 2195 (KLFAGFQGAY…TLRRKWLDSF (674 aa)) are cytoplasmic. The residue at position 1531 (Tyr1531) is an O-(5'-phospho-RNA)-tyrosine. The region spanning 1551–1729 (GPAFEFAVAM…FSAALLKHYF (179 aa)) is the Peptidase C3 domain. Active-site for protease 3C activity residues include His1590, Glu1621, and Cys1697. A RdRp catalytic domain is found at 1960–2076 (GHLIAFDYSG…SYPWPIDASL (117 aa)). Asp1966 and Asp2062 together coordinate Mg(2+).

Belongs to the picornaviruses polyprotein family. As to quaternary structure, interacts with capsid protein VP1 and capsid protein VP3 to form heterotrimeric protomers. In terms of assembly, interacts with capsid protein VP0, and capsid protein VP3 to form heterotrimeric protomers. Five protomers subsequently associate to form pentamers which serve as building blocks for the capsid. Interacts with capsid protein VP2, capsid protein VP3 and capsid protein VP4 following cleavage of capsid protein VP0. Interacts with capsid protein VP1 and capsid protein VP3 in the mature capsid. As to quaternary structure, interacts with capsid protein VP0 and capsid protein VP1 to form heterotrimeric protomers. Five protomers subsequently associate to form pentamers which serve as building blocks for the capsid. Interacts with capsid protein VP4 in the mature capsid. Interacts with protein 2C; this interaction may be important for virion morphogenesis. In terms of assembly, interacts with capsid protein VP1 and capsid protein VP3. Homodimer. As to quaternary structure, homohexamer; forms a hexameric ring structure with 6-fold symmetry characteristic of AAA+ ATPases. Interacts (via N-terminus) with host RTN3 (via reticulon domain); this interaction is important for viral replication. Interacts with capsid protein VP3; this interaction may be important for virion morphogenesis. In terms of assembly, interacts with protein 3CD. Homodimer. Interacts with host GBF1. Interacts (via GOLD domain) with host ACBD3 (via GOLD domain); this interaction allows the formation of a viral protein 3A/ACBD3 heterotetramer with a 2:2 stoichiometry, which will stimulate the recruitment of host PI4KB in order to synthesize PI4P at the viral RNA replication sites. As to quaternary structure, interacts with RNA-directed RNA polymerase. In terms of assembly, interacts with protein 3AB and with RNA-directed RNA polymerase. Interacts with Viral protein genome-linked and with protein 3CD. Mg(2+) serves as cofactor. Specific enzymatic cleavages in vivo by the viral proteases yield processing intermediates and the mature proteins. Post-translationally, myristoylation is required for the formation of pentamers during virus assembly. Further assembly of 12 pentamers and a molecule of genomic RNA generates the provirion. In terms of processing, during virion maturation, immature virions are rendered infectious following cleavage of VP0 into VP4 and VP2. This maturation seems to be an autocatalytic event triggered by the presence of RNA in the capsid and it is followed by a conformational change infectious virion. Myristoylation is required during RNA encapsidation and formation of the mature virus particle. Post-translationally, VPg is uridylylated by the polymerase into VPg-pUpU. This acts as a nucleotide-peptide primer for the genomic RNA replication.

Its subcellular location is the virion. It is found in the host cytoplasm. The protein localises to the host cytoplasmic vesicle membrane. It localises to the host nucleus. It carries out the reaction a ribonucleoside 5'-triphosphate + H2O = a ribonucleoside 5'-diphosphate + phosphate + H(+). It catalyses the reaction Selective cleavage of Tyr-|-Gly bond in the picornavirus polyprotein.. The catalysed reaction is RNA(n) + a ribonucleoside 5'-triphosphate = RNA(n+1) + diphosphate. The enzyme catalyses Selective cleavage of Gln-|-Gly bond in the poliovirus polyprotein. In other picornavirus reactions Glu may be substituted for Gln, and Ser or Thr for Gly.. With respect to regulation, replication or transcription is subject to high level of random mutations by the nucleotide analog ribavirin. Functionally, forms an icosahedral capsid of pseudo T=3 symmetry with capsid proteins VP2 and VP3. The capsid is 300 Angstroms in diameter, composed of 60 copies of each capsid protein and enclosing the viral positive strand RNA genome. Capsid protein VP1 mainly forms the vertices of the capsid. Capsid protein VP1 interacts with host cell receptor to provide virion attachment to target host cells. This attachment induces virion internalization. Tyrosine kinases are probably involved in the entry process. After binding to its receptor, the capsid undergoes conformational changes. Capsid protein VP1 N-terminus (that contains an amphipathic alpha-helix) and capsid protein VP4 are externalized. Together, they shape a pore in the host membrane through which viral genome is translocated to host cell cytoplasm. Its function is as follows. Forms an icosahedral capsid of pseudo T=3 symmetry with capsid proteins VP2 and VP3. The capsid is 300 Angstroms in diameter, composed of 60 copies of each capsid protein and enclosing the viral positive strand RNA genome. In terms of biological role, lies on the inner surface of the capsid shell. After binding to the host receptor, the capsid undergoes conformational changes. Capsid protein VP4 is released, Capsid protein VP1 N-terminus is externalized, and together, they shape a pore in the host membrane through which the viral genome is translocated into the host cell cytoplasm. Component of immature procapsids, which is cleaved into capsid proteins VP4 and VP2 after maturation. Allows the capsid to remain inactive before the maturation step. Functionally, cysteine protease that cleaves viral polyprotein and specific host proteins. It is responsible for the autocatalytic cleavage between the P1 and P2 regions, which is the first cleavage occurring in the polyprotein. Also cleaves the host translation initiation factor EIF4G1, in order to shut down the capped cellular mRNA translation. Inhibits the host nucleus-cytoplasm protein and RNA trafficking by cleaving host members of the nuclear pores. Counteracts stress granule formation probably by antagonizing its assembly or promoting its dissassembly. Its function is as follows. Plays an essential role in the virus replication cycle by acting as a viroporin. Creates a pore in the host endoplasmic reticulum and as a consequence releases Ca2+ in the cytoplasm of infected cell. In turn, high levels of cytoplasmic calcium may trigger membrane trafficking and transport of viral ER-associated proteins to viroplasms, sites of viral genome replication. In terms of biological role, induces and associates with structural rearrangements of intracellular membranes. Displays RNA-binding, nucleotide binding and NTPase activities. May play a role in virion morphogenesis and viral RNA encapsidation by interacting with the capsid protein VP3. Localizes the viral replication complex to the surface of membranous vesicles. Together with protein 3CD binds the Cis-Active RNA Element (CRE) which is involved in RNA synthesis initiation. Acts as a cofactor to stimulate the activity of 3D polymerase, maybe through a nucleid acid chaperone activity. Functionally, localizes the viral replication complex to the surface of membranous vesicles. It inhibits host cell endoplasmic reticulum-to-Golgi apparatus transport and causes the disassembly of the Golgi complex, possibly through GBF1 interaction. This would result in depletion of MHC, trail receptors and IFN receptors at the host cell surface. Plays an essential role in viral RNA replication by recruiting ACBD3 and PI4KB at the viral replication sites, thereby allowing the formation of the rearranged membranous structures where viral replication takes place. Its function is as follows. Acts as a primer for viral RNA replication and remains covalently bound to viral genomic RNA. VPg is uridylylated prior to priming replication into VPg-pUpU. The oriI viral genomic sequence may act as a template for this. The VPg-pUpU is then used as primer on the genomic RNA poly(A) by the RNA-dependent RNA polymerase to replicate the viral genome. During genome replication, the VPg-RNA linkage is removed by the host TDP2, thereby accelerating replication. During the late stage of the replication cycle, host TDP2 is excluded from sites of viral RNA synthesis and encapsidation, allowing for the generation of progeny virions. In terms of biological role, involved in the viral replication complex and viral polypeptide maturation. It exhibits protease activity with a specificity and catalytic efficiency that is different from protease 3C. Protein 3CD lacks polymerase activity. The 3C domain in the context of protein 3CD may have an RNA binding activity. Protein 3CD binds to the 5'UTR of the viral genome. Replicates the viral genomic RNA on the surface of intracellular membranes. May form linear arrays of subunits that propagate along a strong head-to-tail interaction called interface-I. Covalently attaches UMP to a tyrosine of VPg, which is used to prime RNA synthesis. The positive stranded RNA genome is first replicated at virus induced membranous vesicles, creating a dsRNA genomic replication form. This dsRNA is then used as template to synthesize positive stranded RNA genomes. ss(+)RNA genomes are either translated, replicated or encapsidated. Functionally, major viral protease that mediates proteolytic processing of the polyprotein. Cleaves host EIF5B, contributing to host translation shutoff. Also cleaves host PABPC1, contributing to host translation shutoff. Cleaves host NLRP1, triggers host N-glycine-mediated degradation of the autoinhibitory NLRP1 N-terminal fragment. The protein is Genome polyprotein of Echovirus 11 (strain Gregory).